Here is a 138-residue protein sequence, read N- to C-terminus: Nucleoside diphosphate kinase (138 aa).

6 residues coordinate ATP: lysine 10, phenylalanine 58, arginine 86, threonine 92, arginine 103, and asparagine 113. The active-site Pros-phosphohistidine intermediate is histidine 116.

Belongs to the NDK family. In terms of assembly, homotetramer. The cofactor is Mg(2+).

It is found in the cytoplasm. The catalysed reaction is a 2'-deoxyribonucleoside 5'-diphosphate + ATP = a 2'-deoxyribonucleoside 5'-triphosphate + ADP. It catalyses the reaction a ribonucleoside 5'-diphosphate + ATP = a ribonucleoside 5'-triphosphate + ADP. Functionally, major role in the synthesis of nucleoside triphosphates other than ATP. The ATP gamma phosphate is transferred to the NDP beta phosphate via a ping-pong mechanism, using a phosphorylated active-site intermediate. The polypeptide is Nucleoside diphosphate kinase (Haemophilus ducreyi (strain 35000HP / ATCC 700724)).